Here is a 403-residue protein sequence, read N- to C-terminus: MAVQTLKDLLDAGVEGRTVLVRSDLNVPLDGGEITDPGRIVASAPTLRALAEGGAKVIVTAHLGRPDGQPDPKFSLAPVAAKLAEILGRNVQLAGDVVGQDALARSEGLTDGDVLMLENIRFDPRETSKDEAERVKLAKALVELVGDDGAFVSDGFGVVHRKQASVFDVAKLLPHYAGYLVGAEVEVLAKLTQDAARPYAVVLGGSKVSDKLAVIEALAPKVDTLVIGGGMFYTFLAAQGVSVGNSLCEESMIETCKGLLDRYADVIHIPQDVVVADSFSADAESKIVPFDKIPDGWMGLDIGPESVKRFAAILTGAKTVFWNGPMGVFEFPKFEAGTRGVAEAIVEATEKGAFSVVGGGDSAAAVRQLGIPDEGFSHISTGGGASLEYLEGKELPGIAVLEG.

Substrate is bound by residues Asp24–Asn26, Arg39, His62–Arg65, Arg121, and Arg161. ATP contacts are provided by residues Lys211, Gly299, Glu330, and Gly359 to Ser362.

The protein belongs to the phosphoglycerate kinase family. As to quaternary structure, monomer.

The protein localises to the cytoplasm. The catalysed reaction is (2R)-3-phosphoglycerate + ATP = (2R)-3-phospho-glyceroyl phosphate + ADP. Its pathway is carbohydrate degradation; glycolysis; pyruvate from D-glyceraldehyde 3-phosphate: step 2/5. The sequence is that of Phosphoglycerate kinase from Rhodococcus erythropolis (strain PR4 / NBRC 100887).